An 84-amino-acid chain; its full sequence is MLAWVIIVSIITAGLSVALVGMNATKAQGNAAASALESVARQPEAGDQINRMLLFALAFIETIMIFTLTVALILLFANPLLGKL.

The next 2 helical transmembrane spans lie at 1-21 (MLAW…ALVG) and 53-73 (LLFA…VALI).

It belongs to the ATPase C chain family. F-type ATPases have 2 components, F(1) - the catalytic core - and F(0) - the membrane proton channel. F(1) has five subunits: alpha(3), beta(3), gamma(1), delta(1), epsilon(1). F(0) has three main subunits: a(1), b(2) and c(10-14). The alpha and beta chains form an alternating ring which encloses part of the gamma chain. F(1) is attached to F(0) by a central stalk formed by the gamma and epsilon chains, while a peripheral stalk is formed by the delta and b chains.

It is found in the cell inner membrane. F(1)F(0) ATP synthase produces ATP from ADP in the presence of a proton or sodium gradient. F-type ATPases consist of two structural domains, F(1) containing the extramembraneous catalytic core and F(0) containing the membrane proton channel, linked together by a central stalk and a peripheral stalk. During catalysis, ATP synthesis in the catalytic domain of F(1) is coupled via a rotary mechanism of the central stalk subunits to proton translocation. In terms of biological role, key component of the F(0) channel; it plays a direct role in translocation across the membrane. A homomeric c-ring of between 10-14 subunits forms the central stalk rotor element with the F(1) delta and epsilon subunits. The sequence is that of ATP synthase subunit c from Dictyoglomus thermophilum (strain ATCC 35947 / DSM 3960 / H-6-12).